We begin with the raw amino-acid sequence, 498 residues long: Glutamate--tRNA ligase (498 aa).

Positions 11-21 (PSPTGHLHIGN) match the 'HIGH' region motif. Positions 260–264 (KLSKR) match the 'KMSKS' region motif. Lys263 serves as a coordination point for ATP.

It belongs to the class-I aminoacyl-tRNA synthetase family. Glutamate--tRNA ligase type 1 subfamily. As to quaternary structure, monomer.

It is found in the cytoplasm. It catalyses the reaction tRNA(Glu) + L-glutamate + ATP = L-glutamyl-tRNA(Glu) + AMP + diphosphate. Its function is as follows. Catalyzes the attachment of glutamate to tRNA(Glu) in a two-step reaction: glutamate is first activated by ATP to form Glu-AMP and then transferred to the acceptor end of tRNA(Glu). This is Glutamate--tRNA ligase from Leuconostoc mesenteroides subsp. mesenteroides (strain ATCC 8293 / DSM 20343 / BCRC 11652 / CCM 1803 / JCM 6124 / NCDO 523 / NBRC 100496 / NCIMB 8023 / NCTC 12954 / NRRL B-1118 / 37Y).